Consider the following 279-residue polypeptide: Osmoprotective compounds uptake permease protein GgtC (279 aa).

Transmembrane regions (helical) follow at residues Leu-7–Phe-27, Leu-58–Val-78, Ile-90–Tyr-110, Ile-120–Glu-140, Phe-146–Ala-166, Leu-202–Val-222, and Phe-247–Thr-267. The 218-residue stretch at Phe-53–Arg-270 folds into the ABC transmembrane type-1 domain.

Belongs to the binding-protein-dependent transport system permease family. As to quaternary structure, the complex is composed of two ATP-binding proteins (GgtA), two transmembrane proteins (GgtC and GgtD) and a solute-binding protein (GgtB).

The protein resides in the cell membrane. Part of the ABC transporter complex GgtABCD involved in the uptake of the osmoprotective compounds glucosylglycerol (GG), sucrose and trehalose. Responsible for the translocation of the substrate across the membrane. The chain is Osmoprotective compounds uptake permease protein GgtC from Synechocystis sp. (strain ATCC 27184 / PCC 6803 / Kazusa).